The chain runs to 96 residues: (4S)-4-hydroxy-5-phosphonooxypentane-2,3-dione isomerase (96 aa).

The ABM domain occupies 2–91 (HVTLVEINVK…MTGPRKKTTF (90 aa)).

This sequence belongs to the LsrG family. As to quaternary structure, homodimer.

The protein resides in the cytoplasm. It catalyses the reaction (2S)-2-hydroxy-3,4-dioxopentyl phosphate = 3-hydroxy-2,4-dioxopentyl phosphate. Functionally, involved in the degradation of phospho-AI-2, thereby terminating induction of the lsr operon and closing the AI-2 signaling cycle. Catalyzes the conversion of (4S)-4-hydroxy-5-phosphonooxypentane-2,3-dione (P-DPD) to 3-hydroxy-5-phosphonooxypentane-2,4-dione (P-HPD). The protein is (4S)-4-hydroxy-5-phosphonooxypentane-2,3-dione isomerase of Yersinia enterocolitica serotype O:8 / biotype 1B (strain NCTC 13174 / 8081).